The following is a 138-amino-acid chain: Basic phospholipase A2 PL-Y (138 aa).

A signal peptide spans 1–16 (MRTLWIMAVLLVGVEG). Cystine bridges form between C42–C131, C44–C60, C59–C111, C65–C138, C66–C104, C73–C97, and C91–C102. Residues Y43, G45, and G47 each contribute to the Ca(2+) site. H63 is a catalytic residue. D64 provides a ligand contact to Ca(2+). The active site involves D105.

Belongs to the phospholipase A2 family. Group II subfamily. D49 sub-subfamily. The cofactor is Ca(2+). As to expression, expressed by the venom gland.

It localises to the secreted. The enzyme catalyses a 1,2-diacyl-sn-glycero-3-phosphocholine + H2O = a 1-acyl-sn-glycero-3-phosphocholine + a fatty acid + H(+). Snake venom phospholipase A2 (PLA2) that can cleave arachidonate at the sn-2 position from phospholipides in the micellar state or in bilayer membranes. PLA2 catalyzes the calcium-dependent hydrolysis of the 2-acyl groups in 3-sn-phosphoglycerides. The sequence is that of Basic phospholipase A2 PL-Y from Protobothrops flavoviridis (Habu).